The sequence spans 523 residues: Nuclear receptor ROR-alpha (523 aa).

Over residues 1-26 the composition is skewed to low complexity; the sequence is MESAPAAPDPAASEPGSSGADAAAGS. Residues 1–63 are disordered; the sequence is MESAPAAPDP…SRGISVTKKT (63 aa). Lysine 38 is modified (N6-methyllysine). A compositionally biased stretch (polar residues) spans 48 to 57; the sequence is QSYSSTSRGI. 2 consecutive NR C4-type zinc fingers follow at residues 73-93 and 109-133; these read CKIC…CEGC and CPRQ…LQKC. The segment at residues 73 to 138 is a DNA-binding region (nuclear receptor); the sequence is CKICGDKSSG…RLQKCLAVGM (66 aa). The interval 154–183 is disordered; it reads DSLYAEVQKHRMQQQQRDHQQQPGEAEPLT. Threonine 183 carries the phosphothreonine; by MAPK1 modification. Residue lysine 240 forms a Glycyl lysine isopeptide (Lys-Gly) (interchain with G-Cter in SUMO) linkage. The 239-residue stretch at 272–510 folds into the NR LBD domain; it reads ELEHLAQNIS…LHFPPLYKEL (239 aa). The AF-2 motif lies at 506–523; that stretch reads LYKELFTSEFEPAMQIDG.

It belongs to the nuclear hormone receptor family. NR1 subfamily. As to quaternary structure, monomer. Interacts (via the DNA-binding domain) with HIF1A; the interaction enhances HIF1A transcription under hypoxia through increasing protein stability. Interacts with CEBPB; the interaction disrupts the interaction CEBPB:EP300. Interacts with the coactivators NCOA2, PPARGC1A (via LXXLL motif), EP300 and MED1. Interacts with the corepressor NCOR1. Interacts with MAGED1 and CTNNB1. Interacts with CRY1 and PER2. Interacts (via AF-2 motif) with PROX1. Interacts with NRIP1. Isoform 4 interacts (via AF-2 motif) with isoform 1 of FOXP3 (via LXXLL motif). Phosphorylation by conventional PKCs in neurons inhibits transcriptional activity. Phosphorylated on Thr-183 by MAPK1/ERK1 in vitro. Post-translationally, sumoylated by SENP1 and SENP2. Sumoylation, promoted by PIAS2, PIAS3, PIAS4 but not PIAS1, enhances the transcriptional activity. Desumoylated by SENP1. In terms of processing, ubiquitinated, leading to its degradation by the proteasome. Proteasomal degradation is required for efficient transcriptional activity and is prevented by HR. Monomethylated at Lys-38 by EZH2, this creates a degron recognized by a DCX (DDB1-DCAF1/VPRBP-CUL4A-RBX1) E3 ubiquitin ligase complex. In terms of tissue distribution, widely expressed in a number of tissues. Expressed in both regulatory T-cells (Treg) and effector T-cells (Teff). Isoform 4: Highly expressed in the central nervous system, including in the cerebellum.

Its subcellular location is the nucleus. In terms of biological role, nuclear receptor that binds DNA as a monomer to ROR response elements (RORE) containing a single core motif half-site 5'-AGGTCA-3' preceded by a short A-T-rich sequence. Key regulator of embryonic development, cellular differentiation, immunity, circadian rhythm as well as lipid, steroid, xenobiotics and glucose metabolism. Considered to have intrinsic transcriptional activity, have some natural ligands like oxysterols that act as agonists (25-hydroxycholesterol) or inverse agonists (7-oxygenated sterols), enhancing or repressing the transcriptional activity, respectively. Recruits distinct combinations of cofactors to target genes regulatory regions to modulate their transcriptional expression, depending on the tissue, time and promoter contexts. Regulates genes involved in photoreceptor development including OPN1SW, OPN1SM and ARR3 and skeletal muscle development with MYOD1. Required for proper cerebellum development. Regulates SHH gene expression, among others, to induce granule cells proliferation as well as expression of genes involved in calcium-mediated signal transduction. Regulates the circadian expression of several clock genes, including CLOCK, BMAL1, NPAS2 and CRY1. Competes with NR1D1 for binding to their shared DNA response element on some clock genes such as BMAL1, CRY1 and NR1D1 itself, resulting in NR1D1-mediated repression or RORA-mediated activation of clock genes expression, leading to the circadian pattern of clock genes expression. Therefore influences the period length and stability of the clock. Regulates genes involved in lipid metabolism such as apolipoproteins APOA1, APOA5, APOC3 and PPARG. In liver, has specific and redundant functions with RORC as positive or negative modulator of expression of genes encoding phase I and phase II proteins involved in the metabolism of lipids, steroids and xenobiotics, such as CYP7B1 and SULT2A1. Induces a rhythmic expression of some of these genes. In addition, interplays functionally with NR1H2 and NR1H3 for the regulation of genes involved in cholesterol metabolism. Also involved in the regulation of hepatic glucose metabolism through the modulation of G6PC1 and PCK1. In adipose tissue, plays a role as negative regulator of adipocyte differentiation, probably acting through dual mechanisms. May suppress CEBPB-dependent adipogenesis through direct interaction and PPARG-dependent adipogenesis through competition for DNA-binding. Downstream of IL6 and TGFB and synergistically with RORC isoform 2, is implicated in the lineage specification of uncommitted CD4(+) T-helper (T(H)) cells into T(H)17 cells, antagonizing the T(H)1 program. Probably regulates IL17 and IL17F expression on T(H) by binding to the essential enhancer conserved non-coding sequence 2 (CNS2) in the IL17-IL17F locus. Involved in hypoxia signaling by interacting with and activating the transcriptional activity of HIF1A. May inhibit cell growth in response to cellular stress. May exert an anti-inflammatory role by inducing CHUK expression and inhibiting NF-kappa-B signaling. In Homo sapiens (Human), this protein is Nuclear receptor ROR-alpha (RORA).